A 204-amino-acid chain; its full sequence is Glideosome-associated protein 45 (204 aa).

The disordered stretch occupies residues 1 to 86 (MGNKCSRSKV…KEEIDYATQE (86 aa)). The N-myristoyl glycine moiety is linked to residue Gly-2. A targets GAP45 to the cell membrane; however, dispensable for the formation of the glideosome complex and the association with the inner membrane complex region spans residues 2-29 (GNKCSRSKVKEPKRKDIDELAERENLKK). Basic and acidic residues predominate over residues 9 to 53 (KVKEPKRKDIDELAERENLKKQSEEIIEEKPEEVVEQVEETHEEP). Residues 54–73 (LEQEQELDEQKIEEEEEEPE) are compositionally biased toward acidic residues. Position 89 is a phosphoserine; by CPK10 (Ser-89). Ser-103 is modified (phosphoserine; by CPK10 and PKB). The residue at position 149 (Ser-149) is a Phosphoserine; by CPK10.

Component of the glideosome complex composed of GAP50, GAP45, MTIP and MyoA; the complex is formed during the late schizont stage and in merozoites. MyoA, MTIP and GAP45 probably form an initial complex in the cytoplasm which is then recruited to the outer face of the inner membrane complex via the interaction with GAP50. Interacts with GAP50; the interaction is independent of GAP45 phosphorylation status and can also occur independently of the formation of the glideosome complex. Post-translationally, phosphorylated at multiple sites. Phosphorylation increases during the schizont stage and peaks in segmented merozoites. May be phosphorylated by PKB. In schizonts, phosphorylated at Ser-89 and Ser-149 in response to phospholipase C-mediated calcium release. Phosphorylation at Ser-149 begins in early schizonts while phosphorylation at Ser-103 begins in late schizonts. Phosphorylation at Ser-89, Ser-103 and Ser-149 appears to be dispensable for GAP45 inner membrane complex localization or GAP45 inclusion in the glideosome complex. Phosphorylation is not required for interaction with GAP50; however, it may regulate the interaction with MTIP and MyoA. In terms of processing, N-myristoylated by NMT. N-myristoylation may contribute to the targeting of GAP45 to the inner membrane complex with the subsequent palmitoylation strengthening the interaction with the membrane. Palmitoylated. Palmitoylation appears to follow N-myristoylation and may strengthen the interaction with the inner membrane complex.

The protein localises to the inner membrane complex. Its function is as follows. Component of the glideosome complex, an inner membrane complex structure involved in parasite gliding motility and host cell invasion. During the asexual blood stage, required in schizonts to recruit MTIP and MyoA to the inner membrane complex where they assemble with GAP50 to form the glideosome complex. By regulating the formation of the glideosome, plays an essential role during merozoite invasion of host erythrocytes. The polypeptide is Glideosome-associated protein 45 (Plasmodium falciparum (isolate 3D7)).